Here is a 58-residue protein sequence, read N- to C-terminus: UPF0391 membrane protein Bxeno_A2959 (58 aa).

2 helical membrane passes run 4 to 24 and 33 to 53; these read WALF…TGVA and FLFI…FVVT.

It belongs to the UPF0391 family.

Its subcellular location is the cell membrane. This chain is UPF0391 membrane protein Bxeno_A2959, found in Paraburkholderia xenovorans (strain LB400).